The following is a 166-amino-acid chain: MIYIDNRQNKIKVNEEFENKIKEIIDYALKEEKVNIDYEISVVFIDNNSIKEINKDYRNIDKATDVLSFPMLDYEEGKVFKDVYLNYEFDESDLDEGNLILGDIALSLEKAEEQSKEFGHSFLRETCYLTIHSVLHLLGYDHMEEEEKAIMRQREEEILKSFNLRR.

Positions 132, 136, and 142 each coordinate Zn(2+).

The protein belongs to the endoribonuclease YbeY family. Zn(2+) serves as cofactor.

The protein resides in the cytoplasm. In terms of biological role, single strand-specific metallo-endoribonuclease involved in late-stage 70S ribosome quality control and in maturation of the 3' terminus of the 16S rRNA. This Clostridium botulinum (strain 657 / Type Ba4) protein is Endoribonuclease YbeY.